The sequence spans 559 residues: MQAIYDIPEILFQHGVTDVVLSPGSRCAPLSIAFSRHKKLQIKVVPDERSAAFIALGMSLQTQKPTVLICTSGSALYNYAPAIVEAYYQRVPLIVLSADRPPEWIDQNDGQTIRQQEIYGKHSKAFFQLSAEHELPDTQWETYRKVNEAVSISEAYPKGPVHINIPFREPFYPKGEIMFSGSPTVIKREQPLHTLSDEQWKSIQHKLDSYKKILFVGGQHLYDESLRLKIGNIKAPFIGEVVSNLHGVRNVIHTHDTLLTSIPLTDLEELKPDLVISFGGALLSKWLKQFIRSNESIDHWYVGPDVTTPDVFQHLCQIIPVQLNEFLSKTTIASNTQEQFVQRWIQQQTHIIPAIREFNTKEKVFNEFTAVFDVLNHLPAFAKLHLANSMSVRYANTLGISQRNAEVFANRGTSGIDGVISTAYGYALKTSQLVTIITGDLAFFYDRNAFWNNYKPSNLRVVLLNNHGGGIFRMIDGPSALPELDELFETKQTLSARYLATEHGLEYTLCKNLNGLNQALESFFQPSMFGKILEIETDSVKNTEVFKRFKKTIQQSYLS.

It belongs to the TPP enzyme family. MenD subfamily. As to quaternary structure, homodimer. Mg(2+) is required as a cofactor. Mn(2+) serves as cofactor. The cofactor is thiamine diphosphate.

The enzyme catalyses isochorismate + 2-oxoglutarate + H(+) = 5-enolpyruvoyl-6-hydroxy-2-succinyl-cyclohex-3-ene-1-carboxylate + CO2. It functions in the pathway quinol/quinone metabolism; 1,4-dihydroxy-2-naphthoate biosynthesis; 1,4-dihydroxy-2-naphthoate from chorismate: step 2/7. It participates in quinol/quinone metabolism; menaquinone biosynthesis. In terms of biological role, catalyzes the thiamine diphosphate-dependent decarboxylation of 2-oxoglutarate and the subsequent addition of the resulting succinic semialdehyde-thiamine pyrophosphate anion to isochorismate to yield 2-succinyl-5-enolpyruvyl-6-hydroxy-3-cyclohexene-1-carboxylate (SEPHCHC). This is 2-succinyl-5-enolpyruvyl-6-hydroxy-3-cyclohexene-1-carboxylate synthase from Cytophaga hutchinsonii (strain ATCC 33406 / DSM 1761 / CIP 103989 / NBRC 15051 / NCIMB 9469 / D465).